A 326-amino-acid chain; its full sequence is MAFTPFPPRQPTASARLPLTLMTLDDWALATITGTDSEKYMQGQVTADVSQMTEDQHLLAAHCDAKGKMWSNLRLFRDGDGFAWIERRSVRESQLTELKKYAVFSKVTIAPDDERVLLGVAGFQARAALANLFSELPSKEKQVIREGATTLLWFEHPAERFLIVTDEATANTLTDKLRGEAELNNSQQWLALNIEAGFPVIDAANSGQFIPQATNLQALGGISFKKGCYTGQEMVARAKFRGANKRALWLLAGSASRLPEAGEDLELKMGENWRRTGTVLAAVKLEDGQVVVQVVMNNDMEPDSIFRVRDDMNTLHIEPLPYSLEE.

Folate-binding residues include tryptophan 27 and tryptophan 189.

Belongs to the tRNA-modifying YgfZ family.

The protein localises to the cytoplasm. Its function is as follows. Folate-binding protein involved in regulating the level of ATP-DnaA and in the modification of some tRNAs. It is probably a key factor in regulatory networks that act via tRNA modification, such as initiation of chromosomal replication. This is tRNA-modifying protein YgfZ from Escherichia fergusonii (strain ATCC 35469 / DSM 13698 / CCUG 18766 / IAM 14443 / JCM 21226 / LMG 7866 / NBRC 102419 / NCTC 12128 / CDC 0568-73).